A 288-amino-acid chain; its full sequence is Ribosomal RNA small subunit methyltransferase A (288 aa).

Positions 1–14 (MSKNQGGNKHQGGS) are enriched in polar residues. Residues 1-21 (MSKNQGGNKHQGGSKTHLGHR) are disordered. S-adenosyl-L-methionine-binding residues include N29, L31, G56, E77, D102, and N122.

The protein belongs to the class I-like SAM-binding methyltransferase superfamily. rRNA adenine N(6)-methyltransferase family. RsmA subfamily.

It is found in the cytoplasm. It catalyses the reaction adenosine(1518)/adenosine(1519) in 16S rRNA + 4 S-adenosyl-L-methionine = N(6)-dimethyladenosine(1518)/N(6)-dimethyladenosine(1519) in 16S rRNA + 4 S-adenosyl-L-homocysteine + 4 H(+). Its function is as follows. Specifically dimethylates two adjacent adenosines (A1518 and A1519) in the loop of a conserved hairpin near the 3'-end of 16S rRNA in the 30S particle. May play a critical role in biogenesis of 30S subunits. The polypeptide is Ribosomal RNA small subunit methyltransferase A (Idiomarina loihiensis (strain ATCC BAA-735 / DSM 15497 / L2-TR)).